The primary structure comprises 431 residues: 4-hydroxy-3-methylbut-2-en-1-yl diphosphate synthase (flavodoxin) (431 aa).

The segment covering 1–12 (MNKLENPLRDDV) has biased composition (basic and acidic residues). Residues 1 to 20 (MNKLENPLRDDVAGPAPRHQ) form a disordered region. Cys-310, Cys-313, Cys-356, and Glu-363 together coordinate [4Fe-4S] cluster.

Belongs to the IspG family. [4Fe-4S] cluster is required as a cofactor.

It carries out the reaction (2E)-4-hydroxy-3-methylbut-2-enyl diphosphate + oxidized [flavodoxin] + H2O + 2 H(+) = 2-C-methyl-D-erythritol 2,4-cyclic diphosphate + reduced [flavodoxin]. It participates in isoprenoid biosynthesis; isopentenyl diphosphate biosynthesis via DXP pathway; isopentenyl diphosphate from 1-deoxy-D-xylulose 5-phosphate: step 5/6. Functionally, converts 2C-methyl-D-erythritol 2,4-cyclodiphosphate (ME-2,4cPP) into 1-hydroxy-2-methyl-2-(E)-butenyl 4-diphosphate. The protein is 4-hydroxy-3-methylbut-2-en-1-yl diphosphate synthase (flavodoxin) of Rhodopseudomonas palustris (strain TIE-1).